An 849-amino-acid chain; its full sequence is Protein lap1 (849 aa).

LRR repeat units lie at residues 18–39 (VIDK…WQHE), 41–62 (TLEE…LFYC), 64–85 (GLRV…IGSL), 87–108 (QLQH…IKSC), 110–131 (HLTH…ITSL), 133–155 (SLQE…GRLV), 156–177 (NLRI…MVRL), 179–200 (NLQR…VGEL), 202–224 (SLRE…GKLR), 225–246 (DLQH…LSNW), 248–269 (NVEV…VGML), 271–292 (SLVT…ISYL), 294–315 (QLEE…IGML), 317–338 (SLRF…LCSC), 340–362 (QLSV…GNLS), 363–384 (KMKV…MLNL), and 386–407 (NLTS…QYLD). The disordered stretch occupies residues 716-752 (NNISNNLEPNPEEEDQELDDTMSQHSLNSTATNNTSK). The span at 725–735 (NPEEEDQELDD) shows a compositional bias: acidic residues. Residues 736–752 (TMSQHSLNSTATNNTSK) show a composition bias toward polar residues. A PDZ domain is found at 770–849 (VKQVTLKWEN…TVMNIMLSRK (80 aa)).

This sequence belongs to the LAP (LRR and PDZ) protein family.

In terms of biological role, may have a role in assembling adherens junctions. The sequence is that of Protein lap1 from Drosophila melanogaster (Fruit fly).